We begin with the raw amino-acid sequence, 610 residues long: Elongation factor 4 (610 aa).

The tr-type G domain maps to 11 to 193; the sequence is EKIRNFSIIA…QIVEKVPAPS (183 aa). Residues 23–28 and 140–143 contribute to the GTP site; these read DHGKST and NKID.

Belongs to the TRAFAC class translation factor GTPase superfamily. Classic translation factor GTPase family. LepA subfamily.

It is found in the cell membrane. It carries out the reaction GTP + H2O = GDP + phosphate + H(+). Required for accurate and efficient protein synthesis under certain stress conditions. May act as a fidelity factor of the translation reaction, by catalyzing a one-codon backward translocation of tRNAs on improperly translocated ribosomes. Back-translocation proceeds from a post-translocation (POST) complex to a pre-translocation (PRE) complex, thus giving elongation factor G a second chance to translocate the tRNAs correctly. Binds to ribosomes in a GTP-dependent manner. The polypeptide is Elongation factor 4 (Streptococcus uberis (strain ATCC BAA-854 / 0140J)).